The sequence spans 164 residues: Crossover junction endodeoxyribonuclease RuvC (164 aa).

Residues Asp7, Glu67, and Asp139 contribute to the active site. Mg(2+)-binding residues include Asp7, Glu67, and Asp139.

Belongs to the RuvC family. As to quaternary structure, homodimer which binds Holliday junction (HJ) DNA. The HJ becomes 2-fold symmetrical on binding to RuvC with unstacked arms; it has a different conformation from HJ DNA in complex with RuvA. In the full resolvosome a probable DNA-RuvA(4)-RuvB(12)-RuvC(2) complex forms which resolves the HJ. The cofactor is Mg(2+).

The protein resides in the cytoplasm. It carries out the reaction Endonucleolytic cleavage at a junction such as a reciprocal single-stranded crossover between two homologous DNA duplexes (Holliday junction).. The RuvA-RuvB-RuvC complex processes Holliday junction (HJ) DNA during genetic recombination and DNA repair. Endonuclease that resolves HJ intermediates. Cleaves cruciform DNA by making single-stranded nicks across the HJ at symmetrical positions within the homologous arms, yielding a 5'-phosphate and a 3'-hydroxyl group; requires a central core of homology in the junction. The consensus cleavage sequence is 5'-(A/T)TT(C/G)-3'. Cleavage occurs on the 3'-side of the TT dinucleotide at the point of strand exchange. HJ branch migration catalyzed by RuvA-RuvB allows RuvC to scan DNA until it finds its consensus sequence, where it cleaves and resolves the cruciform DNA. The protein is Crossover junction endodeoxyribonuclease RuvC of Geobacter sulfurreducens (strain ATCC 51573 / DSM 12127 / PCA).